We begin with the raw amino-acid sequence, 185 residues long: Translocon-associated protein subunit gamma (185 aa).

N-acetylmethionine is present on methionine 1. Topologically, residues 1-27 (MAPKGSSKQQSEEDLLLQDFSRNLSAK) are lumenal. Residues serine 7 and serine 11 each carry the phosphoserine modification. The helical transmembrane segment at 28 to 48 (SSALFFGNAFIVSAIPIWLYW) threads the bilayer. The Cytoplasmic segment spans residues 49–54 (RIWHMD). Residues 55-76 (LIQSAVLYSVMTLVSTYLVAFA) traverse the membrane as a helical segment. Topologically, residues 77-135 (YKNVKFVLKHKVAQKREDAVSKEVTRKLSEADNRKMSRKEKDERILWKKNEVADYEATT) are lumenal. Serine 105 is modified (phosphoserine). The chain crosses the membrane as a helical span at residues 136–157 (FSIFYNNTLFLVVVIVASFFIL). Over 158–163 (KNFNPT) the chain is Cytoplasmic. Residues 164-184 (VNYILSISASSGLIALLSTGS) traverse the membrane as a helical segment.

It belongs to the TRAP-gamma family. As to quaternary structure, heterotetramer of TRAP-alpha, TRAP-beta, TRAP-delta and TRAP-gamma.

The protein localises to the endoplasmic reticulum membrane. TRAP proteins are part of a complex whose function is to bind calcium to the ER membrane and thereby regulate the retention of ER resident proteins. The sequence is that of Translocon-associated protein subunit gamma (SSR3) from Homo sapiens (Human).